The following is a 379-amino-acid chain: Cytochrome b (379 aa).

The next 4 membrane-spanning stretches (helical) occupy residues 33–53 (FGSL…FLAM), 77–98 (WLIR…FIHV), 113–133 (WNIG…GYVL), and 178–198 (FFAF…VHLL). Heme b is bound by residues H83 and H97. Heme b contacts are provided by H182 and H196. H201 provides a ligand contact to a ubiquinone. The next 4 helical transmembrane spans lie at 226 to 246 (TKDL…ALFF), 288 to 308 (LGGV…PLLN), 320 to 340 (VTQV…WIGG), and 347 to 367 (FTTI…ILIP).

It belongs to the cytochrome b family. As to quaternary structure, the cytochrome bc1 complex contains 11 subunits: 3 respiratory subunits (MT-CYB, CYC1 and UQCRFS1), 2 core proteins (UQCRC1 and UQCRC2) and 6 low-molecular weight proteins (UQCRH/QCR6, UQCRB/QCR7, UQCRQ/QCR8, UQCR10/QCR9, UQCR11/QCR10 and a cleavage product of UQCRFS1). This cytochrome bc1 complex then forms a dimer. It depends on heme b as a cofactor.

The protein resides in the mitochondrion inner membrane. Its function is as follows. Component of the ubiquinol-cytochrome c reductase complex (complex III or cytochrome b-c1 complex) that is part of the mitochondrial respiratory chain. The b-c1 complex mediates electron transfer from ubiquinol to cytochrome c. Contributes to the generation of a proton gradient across the mitochondrial membrane that is then used for ATP synthesis. The sequence is that of Cytochrome b (MT-CYB) from Akodon montensis (Montane grass mouse).